Reading from the N-terminus, the 117-residue chain is Large ribosomal subunit protein bL19 (117 aa).

It belongs to the bacterial ribosomal protein bL19 family.

Functionally, this protein is located at the 30S-50S ribosomal subunit interface and may play a role in the structure and function of the aminoacyl-tRNA binding site. The protein is Large ribosomal subunit protein bL19 of Vibrio vulnificus (strain CMCP6).